Reading from the N-terminus, the 152-residue chain is Ribosomal RNA large subunit methyltransferase H (152 aa).

Residues leucine 69, glycine 96, and phenylalanine 118–phenylalanine 123 contribute to the S-adenosyl-L-methionine site.

The protein belongs to the RNA methyltransferase RlmH family. As to quaternary structure, homodimer.

It localises to the cytoplasm. It carries out the reaction pseudouridine(1915) in 23S rRNA + S-adenosyl-L-methionine = N(3)-methylpseudouridine(1915) in 23S rRNA + S-adenosyl-L-homocysteine + H(+). Its function is as follows. Specifically methylates the pseudouridine at position 1915 (m3Psi1915) in 23S rRNA. The sequence is that of Ribosomal RNA large subunit methyltransferase H from Mesomycoplasma hyopneumoniae (strain 7448) (Mycoplasma hyopneumoniae).